The following is a 440-amino-acid chain: 23S rRNA (uracil(1939)-C(5))-methyltransferase RlmD (440 aa).

The 59-residue stretch at Ser11–Lys69 folds into the TRAM domain. The [4Fe-4S] cluster site is built by Cys82, Cys88, Cys91, and Cys169. Residues Gln272, Phe301, Asn306, Glu322, Asn349, and Asp370 each coordinate S-adenosyl-L-methionine. Cys396 acts as the Nucleophile in catalysis.

Belongs to the class I-like SAM-binding methyltransferase superfamily. RNA M5U methyltransferase family. RlmD subfamily.

The enzyme catalyses uridine(1939) in 23S rRNA + S-adenosyl-L-methionine = 5-methyluridine(1939) in 23S rRNA + S-adenosyl-L-homocysteine + H(+). Functionally, catalyzes the formation of 5-methyl-uridine at position 1939 (m5U1939) in 23S rRNA. This Vibrio cholerae serotype O1 (strain M66-2) protein is 23S rRNA (uracil(1939)-C(5))-methyltransferase RlmD.